The following is a 148-amino-acid chain: Transcriptional regulator MraZ (148 aa).

SpoVT-AbrB domains are found at residues 5–53 (ETAI…AEKE) and 82–125 (SAVL…SEQA).

Belongs to the MraZ family. Forms oligomers.

It is found in the cytoplasm. It localises to the nucleoid. In Xanthomonas oryzae pv. oryzae (strain MAFF 311018), this protein is Transcriptional regulator MraZ.